The following is a 1001-amino-acid chain: Sarcoplasmic/endoplasmic reticulum calcium ATPase 1 (1001 aa).

Over 1–48 (MEAAHSKSTEECLAYFGVSETTGLTPDQVKRHLEKYGHNELPAEEGKS) the chain is Cytoplasmic. A helical membrane pass occupies residues 49 to 69 (LWELVIEQFEDLLVRILLLAA). Residues 70 to 89 (CISFVLAWFEEGEETITAFV) are Lumenal-facing. The helical transmembrane segment at 90 to 110 (EPFVILLILIANAIVGVWQER) threads the bilayer. Residues 111-253 (NAENAIEALK…QDKTPLQQKL (143 aa)) lie on the Cytoplasmic side of the membrane. The chain crosses the membrane as a helical span at residues 254–273 (DEFGEQLSKVISLICVAVWL). Residues 274 to 295 (INIGHFNDPVHGGSWIRGAIYY) lie on the Lumenal side of the membrane. The chain crosses the membrane as a helical span at residues 296–313 (FKIAVALAVAAIPEGLPA). The Ca(2+) site is built by V304, A305, I307, and E309. The Cytoplasmic segment spans residues 314-757 (VITTCLALGT…EEGRAIYNNM (444 aa)). The active-site 4-aspartylphosphate intermediate is D351. Mg(2+) is bound by residues D351 and T353. ATP is bound at residue T353. T441 bears the Phosphothreonine mark. ATP-binding residues include E442, R489, K515, and R560. Position 569 is a phosphothreonine (T569). Residue S581 is modified to Phosphoserine. T625, G626, D627, R678, and K684 together coordinate ATP. D703 lines the Mg(2+) pocket. Residue N706 coordinates ATP. A helical transmembrane segment spans residues 758–777 (KQFIRYLISSNVGEVVCIFL). Ca(2+) contacts are provided by N768 and E771. The Lumenal segment spans residues 778-787 (TAALGLPEAL). The chain crosses the membrane as a helical span at residues 788-808 (IPVQLLWVNLVTDGLPATALG). Positions 788 to 808 (IPVQLLWVNLVTDGLPATALG) are interaction with PLN. Ca(2+)-binding residues include N796, T799, and D800. At 809–828 (FNPPDLDIMDRPPRSPKEPL) the chain is on the cytoplasmic side. Residues 829–851 (ISGWLFFRYMAIGGYVGAATVGA) form a helical membrane-spanning segment. Residues 852–897 (AAWWFMYAEDGPGVTYHQLTHFMQCTEDHPHFEGLDCEIFEAPEPM) are Lumenal-facing. C876 and C888 form a disulfide bridge. The chain crosses the membrane as a helical span at residues 898-917 (TMALSVLVTIEMCNALNSLS). E908 lines the Ca(2+) pocket. At 918 to 930 (ENQSLMRMPPWVN) the chain is on the cytoplasmic side. The helical transmembrane segment at 931 to 949 (IWLLGSICLSMSLHFLILY) threads the bilayer. Residues 932–943 (WLLGSICLSMSL) are interaction with PLN. The Lumenal segment spans residues 950–964 (VDPLPMIFKLKALDL). Residues 965 to 985 (TQWLMVLKISLPVIGLDEILK) form a helical membrane-spanning segment. Residues 986–1001 (FIARNYLEDPEDERRK) are Cytoplasmic-facing.

The protein belongs to the cation transport ATPase (P-type) (TC 3.A.3) family. Type IIA subfamily. As to quaternary structure, interacts with sarcolipin (SLN). Interacts with phospholamban (PLN). Interacts with myoregulin (MRLN). Interacts with DWORF. Interacts with VMP1. Requires Mg(2+) as cofactor. In terms of tissue distribution, skeletal muscle (at protein level). Skeletal muscle, fast twitch muscle (type II) fibers.

It localises to the endoplasmic reticulum membrane. The protein resides in the sarcoplasmic reticulum membrane. The catalysed reaction is Ca(2+)(in) + ATP + H2O = Ca(2+)(out) + ADP + phosphate + H(+). Its activity is regulated as follows. Inhibited by sarcolipin (SLN) and myoregulin (MRLN). Has also been shown to be reversibly inhibited by phospholamban (PLN) at low calcium concentrations in vitro. Dephosphorylated PLN decreases the apparent affinity of the ATPase for calcium and this inhibition is regulated by the phosphorylation of PLN in vitro. Enhanced by DWORF; DWORF increases activity by displacing sarcolipin (SLN), phospholamban (PLN) and myoregulin (MRLN). Functionally, key regulator of striated muscle performance by acting as the major Ca(2+) ATPase responsible for the reuptake of cytosolic Ca(2+) into the sarcoplasmic reticulum. Catalyzes the hydrolysis of ATP coupled with the translocation of calcium from the cytosol to the sarcoplasmic reticulum lumen. Contributes to calcium sequestration involved in muscular excitation/contraction. This Oryctolagus cuniculus (Rabbit) protein is Sarcoplasmic/endoplasmic reticulum calcium ATPase 1 (ATP2A1).